A 293-amino-acid chain; its full sequence is 3-methyl-2-oxobutanoate hydroxymethyltransferase (293 aa).

The tract at residues 1-25 (MTDSPTAGTPYGTLPPASPLPQRRP) is disordered. 2 residues coordinate Mg(2+): Asp67 and Asp110. Residues 67 to 68 (DS), Asp110, and Lys139 contribute to the 3-methyl-2-oxobutanoate site. Glu141 provides a ligand contact to Mg(2+). Glu208 (proton acceptor) is an active-site residue.

It belongs to the PanB family. In terms of assembly, homodecamer; pentamer of dimers. It depends on Mg(2+) as a cofactor.

Its subcellular location is the cytoplasm. The catalysed reaction is 3-methyl-2-oxobutanoate + (6R)-5,10-methylene-5,6,7,8-tetrahydrofolate + H2O = 2-dehydropantoate + (6S)-5,6,7,8-tetrahydrofolate. The protein operates within cofactor biosynthesis; (R)-pantothenate biosynthesis; (R)-pantoate from 3-methyl-2-oxobutanoate: step 1/2. Its function is as follows. Catalyzes the reversible reaction in which hydroxymethyl group from 5,10-methylenetetrahydrofolate is transferred onto alpha-ketoisovalerate to form ketopantoate. The polypeptide is 3-methyl-2-oxobutanoate hydroxymethyltransferase (Acidovorax sp. (strain JS42)).